A 151-amino-acid chain; its full sequence is Small ribosomal subunit protein uS15 (151 aa).

Residues 1–20 (MARLHSGKRGSSGSTRPLRT) are disordered.

Belongs to the universal ribosomal protein uS15 family. In terms of assembly, part of the 30S ribosomal subunit.

The protein is Small ribosomal subunit protein uS15 of Methanococcus aeolicus (strain ATCC BAA-1280 / DSM 17508 / OCM 812 / Nankai-3).